The primary structure comprises 512 residues: GMP synthase [glutamine-hydrolyzing] (512 aa).

A Glutamine amidotransferase type-1 domain is found at 3–196 (NILILDFGSQ…VKHICQTSET (194 aa)). Cys80 acts as the Nucleophile in catalysis. Residues His169 and Glu171 contribute to the active site. Positions 197–387 (WKIETIEKQL…LGLPDVLISR (191 aa)) constitute a GMPS ATP-PPase domain. 225–231 (SGGVDSS) provides a ligand contact to ATP.

As to quaternary structure, homodimer.

The enzyme catalyses XMP + L-glutamine + ATP + H2O = GMP + L-glutamate + AMP + diphosphate + 2 H(+). The protein operates within purine metabolism; GMP biosynthesis; GMP from XMP (L-Gln route): step 1/1. Its function is as follows. Catalyzes the synthesis of GMP from XMP. This chain is GMP synthase [glutamine-hydrolyzing] (guaA), found in Chlamydia muridarum (strain MoPn / Nigg).